The primary structure comprises 307 residues: MIILGIETSHDDSSIAILEDGKVLNMWSISQIDIFKKYGGTIPEIASREHVKNIAILQNFLQEFIDLNKIDHIAYTSEPGLIGCLQVGFLFASALSIALNKPLIKINHLDGHFFSGAIDNKEIKYPALGLIVSGGHSQIIYAKNKFDFQIVGETLDDAIGECYDKVSSRLNLGFPGGPIIDKIHASYKGKYLKLTKPKTSGEFDFSFSGIKTQVLNAFNNKKYESIEQIAASFQEVAINYLIEKFKLAIDKFKPESILLGGGVSANKYLREKFKDLHKNTIFPEIKYATDNGAMIAMCAYLRMKKNS.

The Fe cation site is built by H108 and H112. Residues 131-135, D164, G177, D181, and N266 contribute to the substrate site; that span reads IVSGG. Residue D290 coordinates Fe cation.

This sequence belongs to the KAE1 / TsaD family. Fe(2+) serves as cofactor.

The protein resides in the cytoplasm. It catalyses the reaction L-threonylcarbamoyladenylate + adenosine(37) in tRNA = N(6)-L-threonylcarbamoyladenosine(37) in tRNA + AMP + H(+). Functionally, required for the formation of a threonylcarbamoyl group on adenosine at position 37 (t(6)A37) in tRNAs that read codons beginning with adenine. Is involved in the transfer of the threonylcarbamoyl moiety of threonylcarbamoyl-AMP (TC-AMP) to the N6 group of A37, together with TsaE and TsaB. TsaD likely plays a direct catalytic role in this reaction. The polypeptide is tRNA N6-adenosine threonylcarbamoyltransferase (Mycoplasmopsis synoviae (strain 53) (Mycoplasma synoviae)).